We begin with the raw amino-acid sequence, 620 residues long: MMENNRNYLIAIALSVMVVLGWQFFYMNPRIEAQRQAEQAQQAQQAKTPATQATPGAAVNGALPGQTQASATTSREDAVAKSARVEINTEALSGSINLTGARLDDLRLKGYHETVDKTSPIITLLNPADTKDGYFAEIGFIGGEKSGSVPGPSTVWTVKDGQTLTETTPVTLTYTNETGLTFSRKISVDKHYMFTIEDTVANAGGADISLAPYGRVTRYNKPAVASTYVLHEGFIGVMGSGDGKFASVEAKYAAIEKENETNAKATGGWLGITDKYWAATLVPPQSLAYDSRFSHFTDGQARFQADYKNDPVTIAPGQSTTLKTLLFAGAKEVPVVDGYALDKSWFGQAFTNLFAGAKDTVQQYDIPRFDLLIDWGWFYFLTKPMFKLMDFFFRQVGNFGVAILLTTIAVKLLFFPLASKQYASMANMKRMQPKMEELKAKHGDDRMALQQAMMELYKTEKINPVAGCWPLLLQIPVFFALYKVIYITIEMRHAPFFGWIHDLSAPDPTSFVNLFGLLPFESPAMLHLGIWPIIMGITMFVQMRMNPTPPDPTQAMLFNWMPLVFTFMLGSFPAGLVIYWAWNNTLSVLQQSIIMKRHGVKIELFDNLKGLFQRKSAKTK.

Residues 7–27 form a helical membrane-spanning segment; sequence NYLIAIALSVMVVLGWQFFYM. Over residues 37–58 the composition is skewed to low complexity; that stretch reads AEQAQQAQQAKTPATQATPGAA. A disordered region spans residues 37–77; sequence AEQAQQAQQAKTPATQATPGAAVNGALPGQTQASATTSRED. 4 helical membrane-spanning segments follow: residues 399–419, 469–489, 514–534, and 560–580; these read FGVAILLTTIAVKLLFFPLAS, WPLLLQIPVFFALYKVIYITI, LFGLLPFESPAMLHLGIWPII, and WMPLVFTFMLGSFPAGLVIYW.

Belongs to the OXA1/ALB3/YidC family. Type 1 subfamily. Interacts with the Sec translocase complex via SecD. Specifically interacts with transmembrane segments of nascent integral membrane proteins during membrane integration.

Its subcellular location is the cell inner membrane. Its function is as follows. Required for the insertion and/or proper folding and/or complex formation of integral membrane proteins into the membrane. Involved in integration of membrane proteins that insert both dependently and independently of the Sec translocase complex, as well as at least some lipoproteins. Aids folding of multispanning membrane proteins. This is Membrane protein insertase YidC from Allorhizobium ampelinum (strain ATCC BAA-846 / DSM 112012 / S4) (Agrobacterium vitis (strain S4)).